The primary structure comprises 105 residues: Large ribosomal subunit protein uL18c (105 aa).

Belongs to the universal ribosomal protein uL18 family. As to quaternary structure, part of the 50S ribosomal subunit; contacts the 5S rRNA.

The protein localises to the plastid. The protein resides in the chloroplast. In terms of biological role, binds 5S rRNA, forms part of the central protuberance of the 50S subunit. The chain is Large ribosomal subunit protein uL18c (rpl18) from Cyanidium caldarium (Red alga).